Here is a 395-residue protein sequence, read N- to C-terminus: Elongation factor Tu (395 aa).

Residues 10–204 (KPHVNIGTIG…TVDSYIPEPK (195 aa)) enclose the tr-type G domain. The tract at residues 19 to 26 (GHVDHGKT) is G1. 19 to 26 (GHVDHGKT) serves as a coordination point for GTP. Thr26 provides a ligand contact to Mg(2+). Residues 60 to 64 (GITIN) form a G2 region. Residues 81-84 (DAPG) are G3. Residues 81-85 (DAPGH) and 136-139 (NKTD) each bind GTP. The G4 stretch occupies residues 136 to 139 (NKTD). The tract at residues 174–176 (SAL) is G5.

It belongs to the TRAFAC class translation factor GTPase superfamily. Classic translation factor GTPase family. EF-Tu/EF-1A subfamily. Monomer.

The protein localises to the cytoplasm. It carries out the reaction GTP + H2O = GDP + phosphate + H(+). In terms of biological role, GTP hydrolase that promotes the GTP-dependent binding of aminoacyl-tRNA to the A-site of ribosomes during protein biosynthesis. This Leuconostoc citreum (strain KM20) protein is Elongation factor Tu.